The sequence spans 579 residues: Glucans biosynthesis protein G (579 aa).

The N-terminal stretch at 1–37 is a signal peptide; sequence MIVSPHKASRIPGNRLRKALMASAALVGLMSAGQLWA. The segment at 516–579 is disordered; that stretch reads AKPAEEAKHD…TWSYQLPADE (64 aa). Over residues 517-539 the composition is skewed to basic and acidic residues; it reads KPAEEAKHDKTAAKHGKAEKAAK.

This sequence belongs to the OpgD/OpgG family.

The protein resides in the periplasm. It participates in glycan metabolism; osmoregulated periplasmic glucan (OPG) biosynthesis. Its function is as follows. Involved in the biosynthesis of osmoregulated periplasmic glucans (OPGs). This chain is Glucans biosynthesis protein G, found in Pseudomonas putida (strain W619).